The following is a 3582-amino-acid chain: Ubiquitin carboxyl-terminal hydrolase 34 (3582 aa).

A phosphoserine mark is found at S352, S486, S487, and S490. Disordered regions lie at residues 503–533, 551–670, 682–705, 775–801, and 1496–1515; these read EEEELRRAAPSPWSPAASPQSSDNSDTHQSG, QQRL…ELRN, GESQGTSERNGTNSGTGKDLVFNT, HHHHHHHHHHHHHHHHHHHHHHHDGHM, and TGSYSDLYPDSDDSSEDQVE. The span at 510 to 524 shows a compositional bias: low complexity; that stretch reads AAPSPWSPAASPQSS. Residues 560 to 570 are compositionally biased toward polar residues; that stretch reads SMQGSSDETAN. Residues 571–590 are compositionally biased toward low complexity; sequence SGEDGSSGPGSSSGHSDGSS. Over residues 591–609 the composition is skewed to polar residues; that stretch reads NEVNSSHASQSAGSPGSEV. Residues 610–653 are compositionally biased toward acidic residues; the sequence is QSEDIADIEALKEEEEEEEEEEEEEEEEDDEEEEDEEEDDDDDD. A compositionally biased stretch (polar residues) spans 684–697; sequence SQGTSERNGTNSGT. Residues 775–798 are compositionally biased toward basic residues; it reads HHHHHHHHHHHHHHHHHHHHHHHD. Residues 1504–1514 are compositionally biased toward acidic residues; sequence PDSDDSSEDQV. S1506 carries the post-translational modification Phosphoserine. A USP domain is found at 1931 to 2276; the sequence is VGLTNLGATC…SAYMLFYKRM (346 aa). C1940 functions as the Nucleophile in the catalytic mechanism. H2201 serves as the catalytic Proton acceptor. Position 2525 is a phosphoserine (S2525). The tract at residues 3369 to 3484 is disordered; it reads SLQEQEAKER…QSNNGRFDDC (116 aa). The span at 3373-3384 shows a compositional bias: basic and acidic residues; it reads QEAKERKTKDDE. S3395 and S3396 each carry phosphoserine. The residue at position 3418 (T3418) is a Phosphothreonine. A phosphoserine mark is found at S3423 and S3443. Over residues 3463–3484 the composition is skewed to basic and acidic residues; that stretch reads DGSHIRSQHAEEQSNNGRFDDC. A Phosphoserine modification is found at S3539.

Belongs to the peptidase C19 family. Interacts with AXIN1 and AXIN2.

It catalyses the reaction Thiol-dependent hydrolysis of ester, thioester, amide, peptide and isopeptide bonds formed by the C-terminal Gly of ubiquitin (a 76-residue protein attached to proteins as an intracellular targeting signal).. Its function is as follows. Ubiquitin hydrolase that can remove conjugated ubiquitin from AXIN1 and AXIN2, thereby acting as a regulator of Wnt signaling pathway. Acts as an activator of the Wnt signaling pathway downstream of the beta-catenin destruction complex by deubiquitinating and stabilizing AXIN1 and AXIN2, leading to promote nuclear accumulation of AXIN1 and AXIN2 and positively regulate beta-catenin (CTNBB1)-mediated transcription. Recognizes and hydrolyzes the peptide bond at the C-terminal Gly of ubiquitin. Involved in the processing of poly-ubiquitin precursors as well as that of ubiquitinated proteins. The sequence is that of Ubiquitin carboxyl-terminal hydrolase 34 (Usp34) from Mus musculus (Mouse).